Here is a 161-residue protein sequence, read N- to C-terminus: Ribosome maturation factor RimP (161 aa).

It belongs to the RimP family.

It localises to the cytoplasm. Its function is as follows. Required for maturation of 30S ribosomal subunits. This chain is Ribosome maturation factor RimP, found in Rickettsia felis (strain ATCC VR-1525 / URRWXCal2) (Rickettsia azadi).